We begin with the raw amino-acid sequence, 4226 residues long: Guanylate cyclase alpha (4226 aa).

At 1-104 (MSDSKKHYNE…SFIFKGLYEQ (104 aa)) the chain is on the cytoplasmic side. The helical transmembrane segment at 105–125 (FLRLPNIWFLLISLLEFIPQY) threads the bilayer. The Extracellular portion of the chain corresponds to 126–131 (QNLSNY). Residue N127 is glycosylated (N-linked (GlcNAc...) asparagine). Residues 132 to 152 (MYYSKHSSFFLLLFFICVSII) form a helical membrane-spanning segment. Over 153–337 (KNIYEDSRRS…LGYVNKELNS (185 aa)) the chain is Cytoplasmic. Residues 338-358 (YTIIGLIFTFICVFISVLFKW) form a helical membrane-spanning segment. Topologically, residues 359 to 392 (TEDDKFRNGSHFFLITVKDNICESIVKYTLLYSN) are extracellular. A glycan (N-linked (GlcNAc...) asparagine) is linked at N366. A helical transmembrane segment spans residues 393–413 (IIPISILISVDLISILQSILI). Residues 414–2083 (ENDNHISTFE…FIYGSKHLYT (1670 aa)) are Cytoplasmic-facing. Disordered stretches follow at residues 552–572 (EHSQTLDNNNNNDNNNNNNIC), 832–904 (SSKN…SNND), 968–989 (INNNNNNNNDQKTNNLKYKSSS), and 1740–1765 (NINKNYKYDKNDKHNNNNNNNNNNSN). Residues 558–570 (DNNNNNDNNNNNN) show a composition bias toward low complexity. The segment covering 838-847 (TLDDPTELIS) has biased composition (acidic residues). Residues 854-873 (LRDKYEHTSDKKNDTNKNRD) are compositionally biased toward basic and acidic residues. Over residues 874–904 (GANNSNNNNNKDVSNNKNKNNNNYNYNSNND) the composition is skewed to low complexity. Positions 1745–1754 (YKYDKNDKHN) are enriched in basic and acidic residues. A compositionally biased stretch (low complexity) spans 1755 to 1765 (NNNNNNNNNSN). Residues 2084-2104 (ISIILYWNFFKNILLILPIFF) form a helical membrane-spanning segment. Residues 2105-2119 (YQAYASWSCVKIYPE) are Extracellular-facing. The chain crosses the membrane as a helical span at residues 2120 to 2140 (LLYTFFSIFWVFIPIIYYMFL). The Cytoplasmic segment spans residues 2141–2169 (QHNLNYDILYNIPLFYALSRRRYNMNCFK). Residues 2170 to 2190 (FLPWIFEAIFYSMIIYFFAYA) traverse the membrane as a helical segment. The Extracellular segment spans residues 2191–2202 (ALKENSHLNNGE). A helical transmembrane segment spans residues 2203 to 2223 (VITINTFGNICFIGCLLISIL). Over 2224-2235 (RLFLEGSLWSPS) the chain is Cytoplasmic. Residues 2236 to 2256 (ILITCFGCFLFVFFPSLLFIC) traverse the membrane as a helical segment. Over 2257–2275 (FAYLSNEYIREVFRQTFLW) the chain is Extracellular. The helical transmembrane segment at 2276–2296 (APLYVLLILWFSTCIISYIFI) threads the bilayer. At 2297–2787 (NFTKSILFPN…QIHKKNKFYK (491 aa)) the chain is on the cytoplasmic side. The segment at 2477–2505 (NNDNNNDDNDNDNNNNNNNNDNYNNNDHN) is disordered. Residues 2488–2502 (DNNNNNNNNDNYNNN) show a composition bias toward low complexity. The chain crosses the membrane as a helical span at residues 2788 to 2808 (TFTPWYRFIFLLLGVFFLYVW). The Extracellular segment spans residues 2809–2828 (KLESSLSQLWNMPSDASTDV). A helical transmembrane segment spans residues 2829-2849 (FILFLSLLLELVLLAATVTTF). The Cytoplasmic segment spans residues 2850 to 2860 (FSNIFIENFNK). The helical transmembrane segment at 2861–2881 (IISAVVILIITYHVVSYSVTH) threads the bilayer. Residues 2882–2900 (IDGVFQAVLFPLYTFVILR) are Extracellular-facing. The helical transmembrane segment at 2901-2921 (LPFVNAVLCNIIFLGLFIIRF) threads the bilayer. Residues 2922–2930 (NGDHFLDKK) are Cytoplasmic-facing. The chain crosses the membrane as a helical span at residues 2931 to 2951 (GLAHYIPLFIGVDVFVGFVGY). The Extracellular segment spans residues 2952-3008 (RLEYNQRKNFLLEYSVESSRRKQREILNTMLPPFVVDEMIYSELNEEGIPISLKAED). Residues 3009–3029 (ISTVTIIFCDIYDFQNIVASI) traverse the membrane as a helical segment. Positions 3013 to 3270 (TIIFCDIYDF…DTVNTASRMK (258 aa)) constitute a Guanylate cyclase 1 domain. The Cytoplasmic segment spans residues 3030-3738 (EPTRLVEVLD…SNINSIEQAL (709 aa)). 2 disordered regions span residues 3077-3150 (EDEL…FEED) and 3201-3230 (DANDDTHNVNDSFNNDKAENDNTNTDNNKP). Composition is skewed to low complexity over residues 3083-3098 (NKYSNNNKNNNNNYYY) and 3108-3138 (NNNNNNNNNNNNNNNNNNNNLNNNNNNNNVN). Residues 3140–3150 (SDDDGDFFEED) show a composition bias toward acidic residues. Basic and acidic residues predominate over residues 3201–3220 (DANDDTHNVNDSFNNDKAEN). Residues 3739 to 3759 (IIFLVTFVMQTLISSTVSIVF) traverse the membrane as a helical segment. Residues 3760-3773 (IDHKRATQTLHINY) lie on the Extracellular side of the membrane. The chain crosses the membrane as a helical span at residues 3774-3794 (FAYWSVRSVYTFFGFVLWLLF). Topologically, residues 3795–3811 (HYRTRPEVSSLLNIKWM) are cytoplasmic. A helical transmembrane segment spans residues 3812–3832 (IFFLNLLFISAACVFSIAYLW). At 3833 to 3840 (AISETDQT) the chain is on the extracellular side. A helical transmembrane segment spans residues 3841 to 3861 (TSYTIWMTNDTIEFFFYLVIL). Residues 3862 to 3871 (HHNTGMLFQT) lie on the Cytoplasmic side of the membrane. The helical transmembrane segment at 3872 to 3892 (CILVDLLFITMSLTFIATSVV) threads the bilayer. Residue K3893 is a topological domain, extracellular. A helical transmembrane segment spans residues 3894–3914 (TITTDSTVLLIPWYVAFNLIS). At 3915–4226 (TYCKESIDRR…INVNDRQSNL (312 aa)) the chain is on the cytoplasmic side. One can recognise a Guanylate cyclase 2 domain in the interval 3970 to 4104 (TFLFADICGF…IDVLTGNLME (135 aa)). Mg(2+)-binding residues include D3975, I3976, and D4019.

This sequence in the N-terminal section; belongs to the cation transport ATPase (P-type) (TC 3.A.3) family. Type IV subfamily. In the C-terminal section; belongs to the adenylyl cyclase class-4/guanylyl cyclase family. It depends on Mg(2+) as a cofactor. Requires Mn(2+) as cofactor.

The protein resides in the cell membrane. It localises to the cytoplasmic vesicle membrane. The catalysed reaction is GTP = 3',5'-cyclic GMP + diphosphate. Its function is as follows. Catalyzes the synthesis of the second messenger cGMP from GTP. In asexual blood stage schizonts, required for cGMP production which is essential for PKG activation, PKG-dependent Ca(2+) release, and ultimately merozoite egress from host erythrocytes. The sequence is that of Guanylate cyclase alpha from Plasmodium falciparum (isolate 3D7).